A 477-amino-acid polypeptide reads, in one-letter code: Glycogen synthase (477 aa).

K15 contributes to the ADP-alpha-D-glucose binding site.

This sequence belongs to the glycosyltransferase 1 family. Bacterial/plant glycogen synthase subfamily.

It catalyses the reaction [(1-&gt;4)-alpha-D-glucosyl](n) + ADP-alpha-D-glucose = [(1-&gt;4)-alpha-D-glucosyl](n+1) + ADP + H(+). It participates in glycan biosynthesis; glycogen biosynthesis. Its function is as follows. Synthesizes alpha-1,4-glucan chains using ADP-glucose. The protein is Glycogen synthase of Shigella dysenteriae serotype 1 (strain Sd197).